The following is a 267-amino-acid chain: MKKILLTNDDGYHAKGIKALEQALENMAEIYVVAPKHEKSACSQCITITAPLRAEKIKGKEGRHYRIDDGTPSDCVYLAINELFKHVCFDLVISGINLGSNMGEDTIYSGTVAGAIEGTIQGVPSIAISQILSNKNKNTPLSFDLAQKIIQDLVQNVFTKGYPLKGRKLLNVNVPNCSLQEYKGERITPKGYRLYKKEVHKRTDPKNESYFWLGLHPLKWQKRENEDRLSDFDAIASNHASITPLNLDLTSYDDLKSLESWHEGMLK.

Residues D9, D10, S40, and N97 each coordinate a divalent metal cation.

It belongs to the SurE nucleotidase family. Requires a divalent metal cation as cofactor.

The protein localises to the cytoplasm. It carries out the reaction a ribonucleoside 5'-phosphate + H2O = a ribonucleoside + phosphate. In terms of biological role, nucleotidase that shows phosphatase activity on nucleoside 5'-monophosphates. The sequence is that of 5'-nucleotidase SurE from Helicobacter pylori (strain J99 / ATCC 700824) (Campylobacter pylori J99).